The following is a 241-amino-acid chain: Large ribosomal subunit protein uL3 (241 aa).

2 disordered regions span residues 140–168 (SHRSIGSTGGRQDPGKTFKNKKMPGHMGD) and 216–241 (APKPGAFKLNGSEAAPAAEAVNEEGA). At Gln-151 the chain carries N5-methylglutamine.

The protein belongs to the universal ribosomal protein uL3 family. Part of the 50S ribosomal subunit. Forms a cluster with proteins L14 and L19. Methylated by PrmB.

In terms of biological role, one of the primary rRNA binding proteins, it binds directly near the 3'-end of the 23S rRNA, where it nucleates assembly of the 50S subunit. In Xanthobacter autotrophicus (strain ATCC BAA-1158 / Py2), this protein is Large ribosomal subunit protein uL3.